The primary structure comprises 676 residues: tRNA 5-methylaminomethyl-2-thiouridine biosynthesis bifunctional protein MnmC (676 aa).

The tRNA (mnm(5)s(2)U34)-methyltransferase stretch occupies residues 1-241; the sequence is MFTVTPAKIY…KRECLCGIKN (241 aa). The interval 268-676 is FAD-dependent cmnm(5)s(2)U34 oxidoreductase; that stretch reads IGGGIASLFT…RKLLKGTEIK (409 aa).

The protein in the N-terminal section; belongs to the methyltransferase superfamily. tRNA (mnm(5)s(2)U34)-methyltransferase family. This sequence in the C-terminal section; belongs to the DAO family. It depends on FAD as a cofactor.

The protein localises to the cytoplasm. The catalysed reaction is 5-aminomethyl-2-thiouridine(34) in tRNA + S-adenosyl-L-methionine = 5-methylaminomethyl-2-thiouridine(34) in tRNA + S-adenosyl-L-homocysteine + H(+). Functionally, catalyzes the last two steps in the biosynthesis of 5-methylaminomethyl-2-thiouridine (mnm(5)s(2)U) at the wobble position (U34) in tRNA. Catalyzes the FAD-dependent demodification of cmnm(5)s(2)U34 to nm(5)s(2)U34, followed by the transfer of a methyl group from S-adenosyl-L-methionine to nm(5)s(2)U34, to form mnm(5)s(2)U34. The sequence is that of tRNA 5-methylaminomethyl-2-thiouridine biosynthesis bifunctional protein MnmC from Histophilus somni (strain 2336) (Haemophilus somnus).